The following is a 914-amino-acid chain: Protein translocase subunit SecA (914 aa).

Residues Gln86, 104 to 108 (GEGKT), and Asp512 each bind ATP. Positions 898, 900, 909, and 910 each coordinate Zn(2+).

The protein belongs to the SecA family. In terms of assembly, monomer and homodimer. Part of the essential Sec protein translocation apparatus which comprises SecA, SecYEG and auxiliary proteins SecDF-YajC and YidC. Zn(2+) is required as a cofactor.

The protein resides in the cell inner membrane. It is found in the cytoplasm. It carries out the reaction ATP + H2O + cellular proteinSide 1 = ADP + phosphate + cellular proteinSide 2.. Part of the Sec protein translocase complex. Interacts with the SecYEG preprotein conducting channel. Has a central role in coupling the hydrolysis of ATP to the transfer of proteins into and across the cell membrane, serving both as a receptor for the preprotein-SecB complex and as an ATP-driven molecular motor driving the stepwise translocation of polypeptide chains across the membrane. The sequence is that of Protein translocase subunit SecA from Bordetella petrii (strain ATCC BAA-461 / DSM 12804 / CCUG 43448).